A 715-amino-acid chain; its full sequence is Beta-galactosidase 9 (715 aa).

The signal sequence occupies residues 1-20 (MSGGAVAFLLLVAAAAVANA). Catalysis depends on E178, which acts as the Proton donor. The Nucleophile role is filled by E247.

Belongs to the glycosyl hydrolase 35 family.

Its subcellular location is the secreted. The protein localises to the extracellular space. It is found in the apoplast. It carries out the reaction Hydrolysis of terminal non-reducing beta-D-galactose residues in beta-D-galactosides.. This chain is Beta-galactosidase 9, found in Oryza sativa subsp. japonica (Rice).